The primary structure comprises 213 residues: ATP-dependent dethiobiotin synthetase BioD (213 aa).

Residue 12 to 17 (NVGKTF) coordinates ATP. Thr16 is a Mg(2+) binding site. Residue Lys36 is part of the active site. Position 40 (Ser40) interacts with substrate. ATP-binding positions include Asp53, 110-113 (EGTG), and 170-171 (NQ). Asp53 and Glu110 together coordinate Mg(2+).

This sequence belongs to the dethiobiotin synthetase family. In terms of assembly, homodimer. Requires Mg(2+) as cofactor.

Its subcellular location is the cytoplasm. It carries out the reaction (7R,8S)-7,8-diammoniononanoate + CO2 + ATP = (4R,5S)-dethiobiotin + ADP + phosphate + 3 H(+). It functions in the pathway cofactor biosynthesis; biotin biosynthesis; biotin from 7,8-diaminononanoate: step 1/2. Catalyzes a mechanistically unusual reaction, the ATP-dependent insertion of CO2 between the N7 and N8 nitrogen atoms of 7,8-diaminopelargonic acid (DAPA, also called 7,8-diammoniononanoate) to form a ureido ring. This Ruthia magnifica subsp. Calyptogena magnifica protein is ATP-dependent dethiobiotin synthetase BioD.